The following is a 258-amino-acid chain: Heat-labile enterotoxin A chain (258 aa).

Residues 1-18 (MKNITFIFFILLASPLYA) form the signal peptide. Residue 25 to 39 (RADSRPPDEIKRSGG) participates in NAD(+) binding. The active site involves Glu-128. Cys-205 and Cys-217 are disulfide-bonded.

The protein belongs to the enterotoxin A family. Heterohexamer of one A chain and of five B chains.

Functionally, the biological activity of the toxin is produced by the A chain, which activates intracellular adenyl cyclase. The protein is Heat-labile enterotoxin A chain (eltA) of Escherichia coli O78:H11 (strain H10407 / ETEC).